The primary structure comprises 899 residues: Protein translocase subunit SecA (899 aa).

ATP is bound by residues Gln-87, 105–109 (GEGKT), and Asp-516. Residues Cys-884, Cys-886, Cys-895, and His-896 each coordinate Zn(2+).

Belongs to the SecA family. As to quaternary structure, monomer and homodimer. Part of the essential Sec protein translocation apparatus which comprises SecA, SecYEG and auxiliary proteins SecDF. Other proteins may also be involved. Zn(2+) serves as cofactor.

Its subcellular location is the cell inner membrane. The protein resides in the cytoplasm. The enzyme catalyses ATP + H2O + cellular proteinSide 1 = ADP + phosphate + cellular proteinSide 2.. In terms of biological role, part of the Sec protein translocase complex. Interacts with the SecYEG preprotein conducting channel. Has a central role in coupling the hydrolysis of ATP to the transfer of proteins into and across the cell membrane, serving as an ATP-driven molecular motor driving the stepwise translocation of polypeptide chains across the membrane. This is Protein translocase subunit SecA from Borrelia garinii subsp. bavariensis (strain ATCC BAA-2496 / DSM 23469 / PBi) (Borreliella bavariensis).